The chain runs to 503 residues: WD repeat-containing protein 55 homolog (503 aa).

The segment at 1-131 (MHTHNNFKTP…DSAAFDLDDL (131 aa)) is disordered. Acidic residues-rich tracts occupy residues 12–23 (DADELDDLDDDM) and 37–56 (VGED…DMEA). Residues 59–76 (PNQNADENESISSDSSFD) are compositionally biased toward polar residues. The span at 78–96 (NAEDSSDSDDSMLEEDEAE) shows a compositional bias: acidic residues. 6 WD repeats span residues 157 to 196 (KLED…NKLL), 201 to 242 (VHSK…KLYE), 244 to 282 (AHDD…PIFE), 285 to 324 (EVED…LYVQ), 327 to 366 (PYEE…YHCD), and 411 to 450 (QHNM…DFGD). The interval 483 to 503 (TKEDEDNADNNDAAAGPSNSA) is disordered.

The protein belongs to the WD repeat WDR55 family.

The protein is WD repeat-containing protein 55 homolog of Drosophila pseudoobscura pseudoobscura (Fruit fly).